We begin with the raw amino-acid sequence, 57 residues long: Alpha-conotoxin-like Sm1.2 (57 aa).

Positions 1 to 16 (MFTVFLLVVLATTVVS) are cleaved as a signal peptide. The propeptide occupies 17–42 (FPSDRESDGANDEARTDEPEEHGPDR). Residues 17 to 46 (FPSDRESDGANDEARTDEPEEHGPDRNGCC) are disordered. Positions 19 to 41 (SDRESDGANDEARTDEPEEHGPD) are enriched in basic and acidic residues. Intrachain disulfides connect cysteine 45–cysteine 51 and cysteine 46–cysteine 56. Cysteine 56 is subject to Cysteine amide.

The protein belongs to the conotoxin A superfamily. In terms of tissue distribution, expressed by the venom duct.

The protein localises to the secreted. Its function is as follows. Alpha-conotoxins act on postsynaptic membranes, they bind to the nicotinic acetylcholine receptors (nAChR) and thus inhibit them. In Conus stercusmuscarum (Fly-specked cone), this protein is Alpha-conotoxin-like Sm1.2.